Here is a 121-residue protein sequence, read N- to C-terminus: Large ribosomal subunit protein uL18 (121 aa).

Belongs to the universal ribosomal protein uL18 family. Part of the 50S ribosomal subunit; part of the 5S rRNA/L5/L18/L25 subcomplex. Contacts the 5S and 23S rRNAs.

Its function is as follows. This is one of the proteins that bind and probably mediate the attachment of the 5S RNA into the large ribosomal subunit, where it forms part of the central protuberance. This is Large ribosomal subunit protein uL18 from Spiroplasma kunkelii.